The sequence spans 277 residues: Large ribosomal subunit protein uL2c (277 aa).

Positions 225 to 277 are disordered; it reads MNPCDHPHGGGEGRSPIGRPKPVTPWGKPALGKKTRSPKRFSNKYIIRSRKMV. Over residues 255 to 277 the composition is skewed to basic residues; it reads LGKKTRSPKRFSNKYIIRSRKMV.

The protein belongs to the universal ribosomal protein uL2 family. As to quaternary structure, part of the 50S ribosomal subunit.

It is found in the plastid. It localises to the chloroplast. In Euglena gracilis, this protein is Large ribosomal subunit protein uL2c (rpl2).